A 314-amino-acid chain; its full sequence is tRNA-cytidine(32) 2-sulfurtransferase (314 aa).

Positions 46-51 (SGGKDS) match the PP-loop motif motif. Cys121, Cys124, and Cys212 together coordinate [4Fe-4S] cluster.

The protein belongs to the TtcA family. In terms of assembly, homodimer. Requires Mg(2+) as cofactor. [4Fe-4S] cluster is required as a cofactor.

It localises to the cytoplasm. The catalysed reaction is cytidine(32) in tRNA + S-sulfanyl-L-cysteinyl-[cysteine desulfurase] + AH2 + ATP = 2-thiocytidine(32) in tRNA + L-cysteinyl-[cysteine desulfurase] + A + AMP + diphosphate + H(+). The protein operates within tRNA modification. Functionally, catalyzes the ATP-dependent 2-thiolation of cytidine in position 32 of tRNA, to form 2-thiocytidine (s(2)C32). The sulfur atoms are provided by the cysteine/cysteine desulfurase (IscS) system. This chain is tRNA-cytidine(32) 2-sulfurtransferase, found in Nitrosomonas europaea (strain ATCC 19718 / CIP 103999 / KCTC 2705 / NBRC 14298).